The following is a 578-amino-acid chain: MNSTLTSKMTVQDALVDNGLLGKGTRSLLMAVAITYAISWINWFFTSWQSSRAVAAAKRAGPGQLKRPPTLPSAVPVVGHIFQFLLGGHAFMSRAAKHYGLGVPVRINLATFPSYIVSGRDCVAAFLKDQGRQLSRIPRGLNYMEHAFGCPHEFVHQFKPRDDVDIEHQMHTALQTMLAGNGLEVLAGRYQTEVAHAALSTSLMGKEHEWTELPDLCSFVEDHVLEAATRALYGPHLVALNPTLARDFWTFNRRVKSMFMGVPKWLNPSAVRARDKMTDNVKRWQLYAAEHCNIDEIPDDVEWEPFYGSRYTRVRQKLLTKRDIMNESARAAENLAFIWATNANSVPSAIWFLLETLHDPSLEKQVRARLQAARTESTDENPLNFDVNKLTSDSLLQSMFAEILRLRVAALVVRQPTDAKGFSLPGGWHIKPKETLSMSTRTELMDPGVWNAGDAANPHPLDSFWAERFLVYPDDPRSGPLREPKRRFGAATNSEPYFSLDGCTWSWVPFGGGRQLCPGRHFAKCEILLTSAIFLSAFEIELLTDKLPGPDEGVYGFGTMPPNGKVPCRIRRRKIVSV.

A helical transmembrane segment spans residues 28–48 (LLMAVAITYAISWINWFFTSW). Residue Cys517 coordinates heme.

Belongs to the cytochrome P450 family. The cofactor is heme.

Its subcellular location is the membrane. It carries out the reaction 3-O-(beta-D-glucopyranosyl)-isomotiol + 2 reduced [NADPH--hemoprotein reductase] + 2 O2 = 2-deacetoxyfuscoatroside + 2 oxidized [NADPH--hemoprotein reductase] + 2 H2O + 3 H(+). The catalysed reaction is 3-O-(beta-D-glucopyranosyl)-2alpha-hydroxyisomotiol + 2 reduced [NADPH--hemoprotein reductase] + 2 O2 = 2-deacetylfuscoatroside + 2 oxidized [NADPH--hemoprotein reductase] + 2 H2O + 3 H(+). The enzyme catalyses 3-O-(beta-D-glucopyranosyl)-2alpha-acetoxyisomotiol + 2 reduced [NADPH--hemoprotein reductase] + 2 O2 = fuscoatroside + 2 oxidized [NADPH--hemoprotein reductase] + 2 H2O + 3 H(+). It catalyses the reaction isomotiol + reduced [NADPH--hemoprotein reductase] + O2 = 19beta-hydroxyisomotiol + oxidized [NADPH--hemoprotein reductase] + H2O + H(+). It carries out the reaction 2alpha-hydroxyisomotiol + reduced [NADPH--hemoprotein reductase] + O2 = 2alpha,19beta-dihydroxyisomotiol + oxidized [NADPH--hemoprotein reductase] + H2O + H(+). The catalysed reaction is 2alpha,19beta-dihydroxyisomotiol + reduced [NADPH--hemoprotein reductase] + O2 = 2alpha-hydroxyismotiol-19-one + oxidized [NADPH--hemoprotein reductase] + 2 H2O + H(+). The enzyme catalyses 2alpha-hydroxyismotiol-19-one + 2 reduced [NADPH--hemoprotein reductase] + O2 = 2-deacetyl,3-deglucopyranosyl-fuscoatroside + 2 oxidized [NADPH--hemoprotein reductase] + H2O + 3 H(+). It participates in secondary metabolite biosynthesis; terpenoid biosynthesis. In terms of biological role, cytochrome P450 monooxygenase; part of the gene cluster that mediates the biosynthesis of the enfumafungin-type antibiotic, fuscoatroside. Within the pathway, fsoE catalyzes the oxidative cleavage of the c19-C20 bond within the E-ring, resulting in the formation of a carboxyl group and a methyl group. FsoE exhibits preferential substrate selectivity toward glycoside substrates over their aglycones. The fuscoatroside biosynthesis is initiated by the cyclization of 2,3(S)-oxidosqualene through FsoA's terpene cyclase (TC) domain, leading to the formation of the fernane skeleton isomotiol, harboring a fernane triterpene skeleton with a C8-C9 double bond. Subsequently, C2-alpha-hydroxylation mediated by fsoD results in the production of 2-alpha-hydroxy-isomotiol, which is further acetylated by fsoF. The glycosyltransferase (GT) domain of FsoA may convert isomotiol, 2-alpha-hydroxy-isomotiol, and the acetylated derivative of 2-alpha-hydroxy-isomotiol into their corresponding glycosides 3-O-(beta-D-glucopyranosyl)-isomotiol, 3-O-(beta-D-glucopyranosyl)-2-alpha-hydroxy-isomotiol, and 3-O-(beta-D-glucopyranosyl)-2-alpha-acetoxy-isomotiol, which then undergo oxidative cleavage under the action of fsoE to form s 2-deacetoxy-fuscoatroside, 2-deacetyl-fuscoatroside, and fuscoatroside, respectively. Although hydroxylation followed by acetylation of 3-O-(beta-D-glucopyranosyl)-isomotiol and 2-deacetoxy-fuscoatroside by fsoD and fsoF could not be ruled out, this process is likely to occur with difficulty due to bulky steric hindrance caused by the presence of a glycan at C3 in these compounds. Interestingly, fsoE can also utilize the aglycones isomotiol and 2-alpha-hydroxy-isomotiol as substrates to generate 19-beta-hydroxy-isomotiol and 2-alpha,19-beta-dihydroxy-isomotiol, respectively. These reactions occur with lower efficiency. Finally, fsoE can further convert 2-alpha,19-beta-dihydroxy-isomotiol into 2-alpha-hydroxy-ismotiol-19-one and 2-alpha-hydroxy-ismotiol-19-one into 2-deacetyl-3-deglucopyranosyl-fuscoatroside. This is Cytochrome P450 monooxygenase fsoE from Humicola fuscoatra.